The chain runs to 285 residues: Pantothenate synthetase (285 aa).

ATP is bound at residue 30–37 (MGFLHEGH). Catalysis depends on histidine 37, which acts as the Proton donor. Residue glutamine 61 coordinates (R)-pantoate. Glutamine 61 provides a ligand contact to beta-alanine. 147-150 (GQKD) lines the ATP pocket. Glutamine 153 contacts (R)-pantoate. Residues valine 176 and 184–187 (KSSR) contribute to the ATP site.

Belongs to the pantothenate synthetase family. As to quaternary structure, homodimer.

Its subcellular location is the cytoplasm. It catalyses the reaction (R)-pantoate + beta-alanine + ATP = (R)-pantothenate + AMP + diphosphate + H(+). It participates in cofactor biosynthesis; (R)-pantothenate biosynthesis; (R)-pantothenate from (R)-pantoate and beta-alanine: step 1/1. In terms of biological role, catalyzes the condensation of pantoate with beta-alanine in an ATP-dependent reaction via a pantoyl-adenylate intermediate. The chain is Pantothenate synthetase from Listeria welshimeri serovar 6b (strain ATCC 35897 / DSM 20650 / CCUG 15529 / CIP 8149 / NCTC 11857 / SLCC 5334 / V8).